Consider the following 165-residue polypeptide: Pyruvoyl-dependent arginine decarboxylase (165 aa).

Ser53 bears the Pyruvic acid (Ser) mark.

Belongs to the PdaD family. In terms of assembly, trimer of an alpha-beta dimer. It depends on pyruvate as a cofactor.

It carries out the reaction L-arginine + H(+) = agmatine + CO2. This Methanocaldococcus jannaschii (strain ATCC 43067 / DSM 2661 / JAL-1 / JCM 10045 / NBRC 100440) (Methanococcus jannaschii) protein is Pyruvoyl-dependent arginine decarboxylase (pdaD).